Consider the following 458-residue polypeptide: ATP synthase subunit beta (458 aa).

Residue 148–155 (GGAGVGKT) coordinates ATP.

This sequence belongs to the ATPase alpha/beta chains family. F-type ATPases have 2 components, CF(1) - the catalytic core - and CF(0) - the membrane proton channel. CF(1) has five subunits: alpha(3), beta(3), gamma(1), delta(1), epsilon(1). CF(0) has three main subunits: a(1), b(2) and c(9-12). The alpha and beta chains form an alternating ring which encloses part of the gamma chain. CF(1) is attached to CF(0) by a central stalk formed by the gamma and epsilon chains, while a peripheral stalk is formed by the delta and b chains.

The protein resides in the cell inner membrane. It carries out the reaction ATP + H2O + 4 H(+)(in) = ADP + phosphate + 5 H(+)(out). Functionally, produces ATP from ADP in the presence of a proton gradient across the membrane. The catalytic sites are hosted primarily by the beta subunits. In Pseudomonas putida (strain ATCC 700007 / DSM 6899 / JCM 31910 / BCRC 17059 / LMG 24140 / F1), this protein is ATP synthase subunit beta.